The sequence spans 137 residues: Large ribosomal subunit protein bL17 (137 aa).

This sequence belongs to the bacterial ribosomal protein bL17 family. In terms of assembly, part of the 50S ribosomal subunit. Contacts protein L32.

The polypeptide is Large ribosomal subunit protein bL17 (Bradyrhizobium sp. (strain BTAi1 / ATCC BAA-1182)).